A 513-amino-acid chain; its full sequence is Sterol 14-alpha demethylase (513 aa).

The chain crosses the membrane as a helical span at residues 8-28 (AYALLAFVAIMALNVTYQFLF). Asn32 and Asn332 each carry an N-linked (GlcNAc...) asparagine glycan. A heme-binding site is contributed by Cys453.

Belongs to the cytochrome P450 family. Requires heme as cofactor.

The protein resides in the endoplasmic reticulum membrane. It carries out the reaction a 14alpha-methyl steroid + 3 reduced [NADPH--hemoprotein reductase] + 3 O2 = a Delta(14) steroid + formate + 3 oxidized [NADPH--hemoprotein reductase] + 4 H2O + 4 H(+). The enzyme catalyses a 14alpha-methyl steroid + reduced [NADPH--hemoprotein reductase] + O2 = a 14alpha-hydroxymethyl steroid + oxidized [NADPH--hemoprotein reductase] + H2O + H(+). It catalyses the reaction a 14alpha-hydroxymethyl steroid + reduced [NADPH--hemoprotein reductase] + O2 = a 14alpha-formyl steroid + oxidized [NADPH--hemoprotein reductase] + 2 H2O + H(+). The catalysed reaction is a 14alpha-formyl steroid + reduced [NADPH--hemoprotein reductase] + O2 = a Delta(14) steroid + formate + oxidized [NADPH--hemoprotein reductase] + H2O + 2 H(+). It carries out the reaction lanosterol + 3 reduced [NADPH--hemoprotein reductase] + 3 O2 = 4,4-dimethyl-5alpha-cholesta-8,14,24-trien-3beta-ol + formate + 3 oxidized [NADPH--hemoprotein reductase] + 4 H2O + 4 H(+). The enzyme catalyses lanosterol + reduced [NADPH--hemoprotein reductase] + O2 = 32-hydroxylanosterol + oxidized [NADPH--hemoprotein reductase] + H2O + H(+). It catalyses the reaction 32-hydroxylanosterol + reduced [NADPH--hemoprotein reductase] + O2 = 32-oxolanosterol + oxidized [NADPH--hemoprotein reductase] + 2 H2O + H(+). The catalysed reaction is 32-oxolanosterol + reduced [NADPH--hemoprotein reductase] + O2 = 4,4-dimethyl-5alpha-cholesta-8,14,24-trien-3beta-ol + formate + oxidized [NADPH--hemoprotein reductase] + H2O + 2 H(+). It carries out the reaction eburicol + 3 reduced [NADPH--hemoprotein reductase] + 3 O2 = 14-demethyleburicol + formate + 3 oxidized [NADPH--hemoprotein reductase] + 4 H2O + 4 H(+). The enzyme catalyses eburicol + reduced [NADPH--hemoprotein reductase] + O2 = 32-hydroxyeburicol + oxidized [NADPH--hemoprotein reductase] + H2O + H(+). It catalyses the reaction 32-hydroxyeburicol + reduced [NADPH--hemoprotein reductase] + O2 = 32-oxoeburicol + oxidized [NADPH--hemoprotein reductase] + 2 H2O + H(+). The catalysed reaction is 32-oxoeburicol + reduced [NADPH--hemoprotein reductase] + O2 = 14-demethyleburicol + formate + oxidized [NADPH--hemoprotein reductase] + H2O + 2 H(+). It functions in the pathway steroid biosynthesis; sterol biosynthesis. In terms of biological role, sterol 14alpha-demethylase, encoded by cyp51A, cyp51B and cyp51C, that plays a critical role in the third module of ergosterol biosynthesis pathway, being ergosterol the major sterol component in fungal membranes that participates in a variety of functions. The third module or late pathway involves the ergosterol synthesis itself through consecutive reactions that mainly occur in the endoplasmic reticulum (ER) membrane. In filamentous fungi, during the initial step of this module, lanosterol (lanosta-8,24-dien-3beta-ol) can be metabolized to eburicol. Sterol 14alpha-demethylase catalyzes the three-step oxidative removal of the 14alpha-methyl group (C-32) of both these sterols in the form of formate, and converts eburicol and lanosterol to 14-demethyleburicol (4,4,24-trimethylergosta-8,14,24(28)-trienol) and 4,4-dimethyl-5alpha-cholesta-8,14,24-trien-3beta-ol, respectively, which are further metabolized by other enzymes in the pathway to ergosterol. Can also use substrates not intrinsic to fungi, such as 24,25-dihydrolanosterol (DHL), producing 4,4'-dimethyl-8,14-cholestadien-3-beta-ol, but at lower rates than the endogenous substrates. As a target of azole drugs, plays a crucial role in azole drug susceptibility. The polypeptide is Sterol 14-alpha demethylase (Aspergillus flavus (strain ATCC 200026 / FGSC A1120 / IAM 13836 / NRRL 3357 / JCM 12722 / SRRC 167)).